Consider the following 854-residue polypeptide: Aryl hydrocarbon receptor (854 aa).

The propeptide occupies 1–9 (MSSGANITY). The tract at residues 1–38 (MSSGANITYASRKRRKPVQKTVKPIPAEGIKSNPSKRH) is disordered. Short sequence motifs (nuclear localization signal) lie at residues 12–15 (RKRR) and 36–41 (KRHRDR). The bHLH domain maps to 26-79 (PAEGIKSNPSKRHRDRLNTELDRLASLLPFPQDVINKLDKLSVLRLSVSYLRAK). The tract at residues 37–65 (RHRDRLNTELDRLASLLPFPQDVINKLDK) is DNA-binding. 3 required for maintaining the overall integrity of the AHR:ARNT heterodimer and its transcriptional activity regions span residues 49-81 (LASL…AKSF), 116-124 (LLQALNGFV), and 264-266 (FAI). The Nuclear export signal motif lies at 63–71 (LDKLSVLRL). The region spanning 111–175 (QEGEFLLQAL…AEFQRQLHWA (65 aa)) is the PAS 1 domain. The PAS 2 domain maps to 270 to 340 (LQPPSILEIR…CAESHIRMIK (71 aa)). Residues 346 to 387 (MTVFRLLAKHSRWRWVQSNARLIYRNGRPDYIIATQRPLTDE) enclose the PAC domain. The tract at residues 425 to 451 (LPIRTKSNTSRKDWAPQSTPSKDSFHP) is disordered. The span at 440–451 (PQSTPSKDSFHP) shows a compositional bias: polar residues.

Homodimer. Heterodimer; efficient DNA binding requires dimerization with another bHLH protein. Interacts with ARNT; the heterodimer ARNT:AHR binds to core DNA sequence 5'-TGCGTG-3' within the dioxin response element (DRE) of target gene promoters and activates their transcription. Binds MYBBP1A. Interacts with coactivators including SRC-1, RIP140 and NOCA7, and with the corepressor SMRT. Interacts with NEDD8 and IVNS1ABP. Interacts with BMAL1. Interacts with HSP90AB1. Interacts with TIPARP; leading to mono-ADP-ribosylation of AHR and subsequent inhibition of AHR. In terms of processing, mono-ADP-ribosylated, leading to inhibit transcription activator activity of AHR.

It is found in the cytoplasm. The protein localises to the nucleus. In terms of biological role, ligand-activated transcription factor that enables cells to adapt to changing conditions by sensing compounds from the environment, diet, microbiome and cellular metabolism, and which plays important roles in development, immunity and cancer. Upon ligand binding, translocates into the nucleus, where it heterodimerizes with ARNT and induces transcription by binding to xenobiotic response elements (XRE). Regulates a variety of biological processes, including angiogenesis, hematopoiesis, drug and lipid metabolism, cell motility and immune modulation. Xenobiotics can act as ligands: upon xenobiotic-binding, activates the expression of multiple phase I and II xenobiotic chemical metabolizing enzyme genes (such as the CYP1A1 gene). Mediates biochemical and toxic effects of halogenated aromatic hydrocarbons. Next to xenobiotics, natural ligands derived from plants, microbiota, and endogenous metabolism are potent AHR agonists. Tryptophan (Trp) derivatives constitute an important class of endogenous AHR ligands. Acts as a negative regulator of anti-tumor immunity: indoles and kynurenic acid generated by Trp catabolism act as ligand and activate AHR, thereby promoting AHR-driven cancer cell motility and suppressing adaptive immunity. Regulates the circadian clock by inhibiting the basal and circadian expression of the core circadian component PER1. Inhibits PER1 by repressing the CLOCK-BMAL1 heterodimer mediated transcriptional activation of PER1. The heterodimer ARNT:AHR binds to core DNA sequence 5'-TGCGTG-3' within the dioxin response element (DRE) of target gene promoters and activates their transcription. The chain is Aryl hydrocarbon receptor (Ahr) from Mus spicilegus (Steppe mouse).